The sequence spans 293 residues: Acetylglutamate kinase (293 aa).

Substrate contacts are provided by residues 71 to 72, arginine 93, and asparagine 186; that span reads GG.

Belongs to the acetylglutamate kinase family. ArgB subfamily.

Its subcellular location is the cytoplasm. The catalysed reaction is N-acetyl-L-glutamate + ATP = N-acetyl-L-glutamyl 5-phosphate + ADP. It participates in amino-acid biosynthesis; L-arginine biosynthesis; N(2)-acetyl-L-ornithine from L-glutamate: step 2/4. Functionally, catalyzes the ATP-dependent phosphorylation of N-acetyl-L-glutamate. This Synechococcus sp. (strain WH7803) protein is Acetylglutamate kinase.